The following is a 434-amino-acid chain: Putative MgpC-like protein MPN_149 (434 aa).

Disordered regions lie at residues 168–193 (GSGQ…PKAV) and 215–267 (EPLD…DNNG). The segment covering 170 to 184 (GQESSWNSQRSQKVL) has biased composition (polar residues). Positions 218-229 (DSTKDGKGKDES) are enriched in basic and acidic residues. The segment covering 248–267 (STGSQMAAVTDSQQSGDNNG) has biased composition (polar residues).

This sequence belongs to the MgpC family.

In Mycoplasma pneumoniae (strain ATCC 29342 / M129 / Subtype 1) (Mycoplasmoides pneumoniae), this protein is Putative MgpC-like protein MPN_149.